The chain runs to 592 residues: Thiol:disulfide interchange protein DsbD (592 aa).

A signal peptide spans 1 to 19 (MKLIASFSIFMLMSIWSFA). Intrachain disulfides connect C130–C136 and C204–C326. A run of 8 helical transmembrane segments spans residues 186–206 (IWVLLIFLALGVGLAFTPCVF), 229–249 (FVLSFVYVQGMALTYSLLGLV), 265–285 (IILGALIVVFALLALVMFGAW), 318–338 (ISGLVASPCTTAPLTGILLYI), 345–365 (LLGFSALYALSLGMGIPLILF), 379–399 (WMNIIKVTFGFMMLAVALMFV), 406–426 (MATDILWSLLGLVTFSYFYVM), and 440–460 (ALVIFIGLFASAMYGYQTIFG). One can recognise a Thioredoxin domain in the interval 443–592 (IFIGLFASAM…AFAAHAKNIL (150 aa)). Residues C508 and C511 are joined by a disulfide bond.

Belongs to the thioredoxin family. DsbD subfamily.

Its subcellular location is the cell inner membrane. It catalyses the reaction [protein]-dithiol + NAD(+) = [protein]-disulfide + NADH + H(+). The catalysed reaction is [protein]-dithiol + NADP(+) = [protein]-disulfide + NADPH + H(+). In terms of biological role, required to facilitate the formation of correct disulfide bonds in some periplasmic proteins and for the assembly of the periplasmic c-type cytochromes. Acts by transferring electrons from cytoplasmic thioredoxin to the periplasm. This transfer involves a cascade of disulfide bond formation and reduction steps. This is Thiol:disulfide interchange protein DsbD from Pseudoalteromonas atlantica (strain T6c / ATCC BAA-1087).